Reading from the N-terminus, the 188-residue chain is Elongation factor P (188 aa).

This sequence belongs to the elongation factor P family.

The protein resides in the cytoplasm. The protein operates within protein biosynthesis; polypeptide chain elongation. In terms of biological role, involved in peptide bond synthesis. Stimulates efficient translation and peptide-bond synthesis on native or reconstituted 70S ribosomes in vitro. Probably functions indirectly by altering the affinity of the ribosome for aminoacyl-tRNA, thus increasing their reactivity as acceptors for peptidyl transferase. The polypeptide is Elongation factor P (Streptomyces coelicolor (strain ATCC BAA-471 / A3(2) / M145)).